The sequence spans 244 residues: Large ribosomal subunit protein uL30 (244 aa).

The interval 1-37 (MAPTKKVPQVPETVLKRRKQRADARTKAAQHKVTVAA) is disordered.

It belongs to the universal ribosomal protein uL30 family.

Binds to G-rich structures in 28S rRNA and in mRNAs. Plays a regulatory role in the translation apparatus; inhibits cell-free translation of mRNAs. This Caenorhabditis elegans protein is Large ribosomal subunit protein uL30 (rpl-7).